The sequence spans 677 residues: Fidgetin-like protein 1 (677 aa).

Positions 203–216 are enriched in polar residues; sequence TSSAPSGESTTATF. Disordered regions lie at residues 203–232, 249–324, and 337–378; these read TSSAPSGESTTATFHRTPLFGNTKKEPQSF, VPSG…SFNG, and GIFG…TDDR. K226 is covalently cross-linked (Glycyl lysine isopeptide (Lys-Gly) (interchain with G-Cter in SUMO2)). A compositionally biased stretch (polar residues) spans 264-280; it reads DSDTINMLSNPTLNKAP. A compositionally biased stretch (basic and acidic residues) spans 281 to 292; the sequence is SKTEDSGQREDN. An N6-acetyllysine modification is found at K341. Over residues 347 to 358 the composition is skewed to polar residues; that stretch reads SNKQDGSEQNGN. Residues A407 and 447 to 452 contribute to the ATP site; that span reads GTGKTL.

The protein belongs to the AAA ATPase family. In terms of assembly, hexamer. Interacts (via N-terminal one-half region) with RAD51; the interaction is direct. Interacts (via N-terminal one-half region) with SPIDR (via the C-terminal region); the interaction is direct. Interacts with FIRRM; may regulate homologous recombination. Mg(2+) is required as a cofactor.

Its subcellular location is the nucleus. The protein resides in the cytoplasm. The protein localises to the perinuclear region. The catalysed reaction is ATP + H2O = ADP + phosphate + H(+). Its function is as follows. Involved in DNA double-strand break (DBS) repair via homologous recombination (HR). Recruited at DSB sites independently of BRCA2, RAD51 and RAD51 paralogs in a H2AX-dependent manner. May regulate osteoblast proliferation and differentiation. May play a role in the control of male meiosis dynamic. The chain is Fidgetin-like protein 1 (Fignl1) from Rattus norvegicus (Rat).